The sequence spans 256 residues: Kallikrein-15 (256 aa).

The signal sequence occupies residues 1–16 (MWLLLTLSFLLASTAA). The propeptide at 17-21 (QDGDK) is activation peptide. The 233-residue stretch at 22–254 (LLEGDECAPH…YLEWIRETMK (233 aa)) folds into the Peptidase S1 domain. An intrachain disulfide couples cysteine 47 to cysteine 63. Residues histidine 62 and aspartate 106 each act as charge relay system in the active site. Intrachain disulfides connect cysteine 138–cysteine 215, cysteine 180–cysteine 194, and cysteine 205–cysteine 230. Asparagine 171 is a glycosylation site (N-linked (GlcNAc...) asparagine). Residue serine 209 is the Charge relay system of the active site. Asparagine 232 carries an N-linked (GlcNAc...) asparagine glycan.

Belongs to the peptidase S1 family. Kallikrein subfamily. As to expression, highest expression in the thyroid gland. Also expressed in the prostate, salivary, and adrenal glands and in the colon testis and kidney.

The protein resides in the secreted. Functionally, protease whose physiological substrate is not yet known. This Homo sapiens (Human) protein is Kallikrein-15 (KLK15).